The sequence spans 456 residues: MPQNTLNIVILAAGKGTRMYSKMPKVLHRIGGKPMVGRVIDTAAALNPQNICVVIGHGKEQVLDTVKRDVVWVEQTEQLGTGHAVKTALPHLSAEGRTLVLYGDVPLIDVETLETLLEAAGNEVGLLTDVPNDPTGLGRIIRDSNGSVTAIVEEKDADAVQKAVKEINTGILVLPNAKLENWLNSLSSNNAQGEYYLTDLIAKAVADGIKVHPVQVRASHLAAGVNNKLQLTELERIFQTEQAQELLKAGVTLRDPARFDLRGRLKHGQDVVIDVNCIFEGDIELGDNVEIGANCVIKNAKIGANSKIAPFSHLESCEVGENNRIGPYARLRPQARLADDVHVGNFVEIKNAAIGKGTKANHLTYIGDAEVGCKTNFGAGTIIANYDGVHKHKTVIGDEVRIGSNCVLVAPVTLGNKVTTGAGSTITRNVEDNKLALARARQTVIEGWVRPEKDKQ.

Positions 1–228 (MPQNTLNIVI…SHLAAGVNNK (228 aa)) are pyrophosphorylase. UDP-N-acetyl-alpha-D-glucosamine is bound by residues 11–14 (LAAG), K25, Q75, 80–81 (GT), 102–104 (YGD), G138, E153, N168, and N226. D104 lines the Mg(2+) pocket. N226 contacts Mg(2+). Positions 229-249 (LQLTELERIFQTEQAQELLKA) are linker. Residues 250–456 (GVTLRDPARF…GWVRPEKDKQ (207 aa)) form an N-acetyltransferase region. R332 and K350 together coordinate UDP-N-acetyl-alpha-D-glucosamine. H362 acts as the Proton acceptor in catalysis. Y365 and N376 together coordinate UDP-N-acetyl-alpha-D-glucosamine. Acetyl-CoA contacts are provided by residues A379, 385–386 (NY), S404, A422, and R439.

It in the N-terminal section; belongs to the N-acetylglucosamine-1-phosphate uridyltransferase family. This sequence in the C-terminal section; belongs to the transferase hexapeptide repeat family. In terms of assembly, homotrimer. Mg(2+) is required as a cofactor.

It localises to the cytoplasm. The enzyme catalyses alpha-D-glucosamine 1-phosphate + acetyl-CoA = N-acetyl-alpha-D-glucosamine 1-phosphate + CoA + H(+). It catalyses the reaction N-acetyl-alpha-D-glucosamine 1-phosphate + UTP + H(+) = UDP-N-acetyl-alpha-D-glucosamine + diphosphate. Its pathway is nucleotide-sugar biosynthesis; UDP-N-acetyl-alpha-D-glucosamine biosynthesis; N-acetyl-alpha-D-glucosamine 1-phosphate from alpha-D-glucosamine 6-phosphate (route II): step 2/2. It participates in nucleotide-sugar biosynthesis; UDP-N-acetyl-alpha-D-glucosamine biosynthesis; UDP-N-acetyl-alpha-D-glucosamine from N-acetyl-alpha-D-glucosamine 1-phosphate: step 1/1. It functions in the pathway bacterial outer membrane biogenesis; LPS lipid A biosynthesis. Functionally, catalyzes the last two sequential reactions in the de novo biosynthetic pathway for UDP-N-acetylglucosamine (UDP-GlcNAc). The C-terminal domain catalyzes the transfer of acetyl group from acetyl coenzyme A to glucosamine-1-phosphate (GlcN-1-P) to produce N-acetylglucosamine-1-phosphate (GlcNAc-1-P), which is converted into UDP-GlcNAc by the transfer of uridine 5-monophosphate (from uridine 5-triphosphate), a reaction catalyzed by the N-terminal domain. This is Bifunctional protein GlmU from Neisseria meningitidis serogroup B (strain ATCC BAA-335 / MC58).